Here is an 88-residue protein sequence, read N- to C-terminus: Putative septation protein SpoVG (88 aa).

The protein belongs to the SpoVG family.

Functionally, could be involved in septation. The protein is Putative septation protein SpoVG of Desulforudis audaxviator (strain MP104C).